Consider the following 141-residue polypeptide: Nucleoside diphosphate kinase (141 aa).

ATP is bound by residues Lys11, Phe59, Arg87, Thr93, Arg104, and Asn114. His117 acts as the Pros-phosphohistidine intermediate in catalysis.

This sequence belongs to the NDK family. As to quaternary structure, homotetramer. It depends on Mg(2+) as a cofactor.

The protein localises to the cytoplasm. It catalyses the reaction a 2'-deoxyribonucleoside 5'-diphosphate + ATP = a 2'-deoxyribonucleoside 5'-triphosphate + ADP. It carries out the reaction a ribonucleoside 5'-diphosphate + ATP = a ribonucleoside 5'-triphosphate + ADP. In terms of biological role, major role in the synthesis of nucleoside triphosphates other than ATP. The ATP gamma phosphate is transferred to the NDP beta phosphate via a ping-pong mechanism, using a phosphorylated active-site intermediate. In Acidovorax sp. (strain JS42), this protein is Nucleoside diphosphate kinase.